A 197-amino-acid chain; its full sequence is ATP-dependent Clp protease proteolytic subunit 2 (197 aa).

The active-site Nucleophile is the serine 97. The active site involves histidine 122.

This sequence belongs to the peptidase S14 family. In terms of assembly, fourteen ClpP subunits assemble into 2 heptameric rings which stack back to back to give a disk-like structure with a central cavity, resembling the structure of eukaryotic proteasomes.

The protein resides in the cytoplasm. The catalysed reaction is Hydrolysis of proteins to small peptides in the presence of ATP and magnesium. alpha-casein is the usual test substrate. In the absence of ATP, only oligopeptides shorter than five residues are hydrolyzed (such as succinyl-Leu-Tyr-|-NHMec, and Leu-Tyr-Leu-|-Tyr-Trp, in which cleavage of the -Tyr-|-Leu- and -Tyr-|-Trp bonds also occurs).. In terms of biological role, cleaves peptides in various proteins in a process that requires ATP hydrolysis. Has a chymotrypsin-like activity. Plays a major role in the degradation of misfolded proteins. This Leptospira interrogans serogroup Icterohaemorrhagiae serovar copenhageni (strain Fiocruz L1-130) protein is ATP-dependent Clp protease proteolytic subunit 2.